Here is a 79-residue protein sequence, read N- to C-terminus: Small ribosomal subunit protein bS21 (79 aa).

The segment at 58 to 79 (ARKKMQREGLLPMKPKPMPGMR) is disordered.

This sequence belongs to the bacterial ribosomal protein bS21 family.

The polypeptide is Small ribosomal subunit protein bS21 (Beijerinckia indica subsp. indica (strain ATCC 9039 / DSM 1715 / NCIMB 8712)).